The following is a 196-amino-acid chain: MELEKFKDANKDELSMIEVAHEILHQRGETMAFADLTNEIQVYLGKSDEEIRDRLAQFYTDLNIDGSFISLGDNVWGLRSWYPYDSIDEALVHGEDEEDEERPRKKRKKVNAFLADVSDDDDVIDYDDDDPEDEDLDNDYDDEDDDDDEGSHELKQYTKDLDDIDDGDDPEDELADGIEGQLTEFSDADLDEENQD.

One can recognise an HTH HARE-type domain in the interval 14 to 81 (LSMIEVAHEI…GDNVWGLRSW (68 aa)). Residues 119–150 (DDDDVIDYDDDDPEDEDLDNDYDDEDDDDDEG) are compositionally biased toward acidic residues. Residues 119–196 (DDDDVIDYDD…DADLDEENQD (78 aa)) are disordered. The span at 151-161 (SHELKQYTKDL) shows a compositional bias: basic and acidic residues. 2 stretches are compositionally biased toward acidic residues: residues 162 to 176 (DDID…ELAD) and 186 to 196 (SDADLDEENQD).

The protein belongs to the RpoE family. RNAP is composed of a core of 2 alpha, a beta and a beta' subunits. The core is associated with a delta subunit and one of several sigma factors.

Functionally, participates in both the initiation and recycling phases of transcription. In the presence of the delta subunit, RNAP displays an increased specificity of transcription, a decreased affinity for nucleic acids, and an increased efficiency of RNA synthesis because of enhanced recycling. The polypeptide is Probable DNA-directed RNA polymerase subunit delta (Ligilactobacillus salivarius (strain UCC118) (Lactobacillus salivarius)).